A 118-amino-acid chain; its full sequence is MYKRSDKVAEAIHELVSGLLVKGLKDPRIGFVTITGVKVSDDIRHATIYYTVMGSDEAKKSTLHGLNSSVGFIRKEVSKELRLRFAPELIFKYDESIEYGNRIDQLLKEIGSEEGGND.

The protein belongs to the RbfA family. Monomer. Binds 30S ribosomal subunits, but not 50S ribosomal subunits or 70S ribosomes.

Its subcellular location is the cytoplasm. Functionally, one of several proteins that assist in the late maturation steps of the functional core of the 30S ribosomal subunit. Associates with free 30S ribosomal subunits (but not with 30S subunits that are part of 70S ribosomes or polysomes). Required for efficient processing of 16S rRNA. May interact with the 5'-terminal helix region of 16S rRNA. This is Ribosome-binding factor A from Geobacter metallireducens (strain ATCC 53774 / DSM 7210 / GS-15).